A 238-amino-acid chain; its full sequence is Ribonuclease PH (238 aa).

A disordered region spans residues 67 to 87 (PRSTHTRSDREAARGKQSGRT). Phosphate-binding positions include arginine 86 and 124 to 126 (GTR).

The protein belongs to the RNase PH family. As to quaternary structure, homohexameric ring arranged as a trimer of dimers.

It catalyses the reaction tRNA(n+1) + phosphate = tRNA(n) + a ribonucleoside 5'-diphosphate. Functionally, phosphorolytic 3'-5' exoribonuclease that plays an important role in tRNA 3'-end maturation. Removes nucleotide residues following the 3'-CCA terminus of tRNAs; can also add nucleotides to the ends of RNA molecules by using nucleoside diphosphates as substrates, but this may not be physiologically important. Probably plays a role in initiation of 16S rRNA degradation (leading to ribosome degradation) during starvation. The chain is Ribonuclease PH from Ralstonia nicotianae (strain ATCC BAA-1114 / GMI1000) (Ralstonia solanacearum).